Reading from the N-terminus, the 89-residue chain is Putative regulatory protein CLL_A1210 (89 aa).

This sequence belongs to the RemA family.

The protein is Putative regulatory protein CLL_A1210 of Clostridium botulinum (strain Eklund 17B / Type B).